We begin with the raw amino-acid sequence, 343 residues long: Ribosomal RNA small subunit methyltransferase C (343 aa).

It belongs to the methyltransferase superfamily. RsmC family. Monomer.

It is found in the cytoplasm. It catalyses the reaction guanosine(1207) in 16S rRNA + S-adenosyl-L-methionine = N(2)-methylguanosine(1207) in 16S rRNA + S-adenosyl-L-homocysteine + H(+). Specifically methylates the guanine in position 1207 of 16S rRNA in the 30S particle. This chain is Ribosomal RNA small subunit methyltransferase C, found in Shigella boydii serotype 4 (strain Sb227).